The primary structure comprises 357 residues: Transcription factor unc-86 (357 aa).

Positions 35-44 match the POU-IV box motif; that stretch reads RAAQVALADI. The POU-specific domain maps to 155 to 232; it reads DMDTDPRQLE…ILHSWLEKAE (78 aa). The homeobox DNA-binding region spans 253-312; that stretch reads KKRKRTSIAAPEKRELEQFFKQQPRPSGERIASIADRLDLKKNVVRVWFCNQRQKQKRDF.

It belongs to the POU transcription factor family. Class-4 subfamily. Interacts with mec-3; the heterooligomer binds to the promoters of mec-3, mec-4 and mec-7. As to expression, specific to neurons and neuroblasts. Expressed in CEM head neurons and in IL2, URA, URB, URX and URY neurons. Not expressed in olfactory sensory neurons but expressed in AIZ interneurons.

The protein resides in the nucleus. Functionally, transcription factor required for correct cell fate determination and differentiation in diverse neuronal cell lineages where it plays a role in specifying the fate of daughter cells during cell divisions. Involved in sensory neuron production and function. Binds both alone and with mec-3 to the mec-3 promoter to initiate and maintain mec-3 expression which is required for sensory neuron differentiation. In addition, binds both alone and with mec-3 to the promoters of mec-4 and mec-7 which act to regulate sensory neuron function. Involved in determining the identity of the serotonergic NSM neurons and the cholinergic IL2 sensory and URA motor neurons. Promotes expression of the cfi-1 transcription factor in the URA and IL2 neurons which in turn activates normal URA and IL2 gene expression. Required to determine the identity of BDU sensory neurons in concert with transcription factor unc-86, regulating expression of a number of genes, including transcription factors ceh-14 and ahr-1, neuropeptides flp-10, nlp-1 and nlp-15, and tyramine receptor-encoding ser-2. Regulates expression of a number of genes in NSM neurons including bas-1, cat-1, dop-3, mgl-3, nlp-13, scd-2 and ptps-1. In the IL2 neurons, required for expression of cho-1, gcy-19, klp-6, lag-2, unc-5 and unc-17. Promotes expression of pkd-2 in the male-specific CEM head neurons. Required for dauer-specific branching of IL2Q neurons and nictation behavior. Controls both the timing and direction of axon outgrowth in HSN neurons. Plays a role in serotonin production by regulating expression of the tryptophan hydrolase tph-1 which catalyzes serotonin synthesis, in the AIM, NSM, HSN and RIH neurons. Involved in regulation of lin-11 expression in the AIZ interneurons, the major interneurons of the olfactory pathway, and is required for odortaxis behavior. Involved in neurite pruning between AIM neurons during larval development by regulating the expression of transcription factor mbr-1. Required for correct localization of unc-40. This is Transcription factor unc-86 (unc-86) from Caenorhabditis elegans.